A 231-amino-acid polypeptide reads, in one-letter code: Staphylococcal superantigen-like 7 (231 aa).

A signal peptide spans 1–30 (MKLKTLAKATLALGLLTTGVITSEGQAVQA).

This sequence belongs to the staphylococcal/streptococcal toxin family. Interacts with host IgA and complement C5; these interactions inhibits complement activation.

The protein localises to the secreted. Functionally, plays a role in the inhibition of host complement-mediated lysis and serum bactericidal activity by interacting with complement component C5. Affects all three pathways of complement activation and inhibits the cleavage of C5 by preventing its binding to C5 convertases. In turn, prevents C5a-mediated neutrophil migration. The protein is Staphylococcal superantigen-like 7 of Staphylococcus aureus (strain NCTC 8325 / PS 47).